Consider the following 428-residue polypeptide: Autophagy-related protein 14 (428 aa).

A coiled-coil region spans residues 82–143 (QEAIDRTAEI…RKKQLDKVKD (62 aa)).

This sequence belongs to the ATG14 family. Component of the autophagy-specific VPS34 PI3-kinase complex I.

The protein localises to the preautophagosomal structure membrane. Its subcellular location is the vacuole membrane. In terms of biological role, required for cytoplasm to vacuole transport (Cvt) and autophagy as a part of the autophagy-specific VPS34 PI3-kinase complex I. This complex is essential to recruit the ATG8-phosphatidylinositol conjugate and the ATG12-ATG5 conjugate to the pre-autophagosomal structure. ATG14 mediates the specific binding of the VPS34 PI3-kinase complex I to the preautophagosomal structure (PAS). Plays a crucial role in hyphal development, conidiogenesis and pathogenicity. Also required for glycogen mobilization, quantity of lipid bodies, and the turgor pressure of appressoria. The chain is Autophagy-related protein 14 from Pyricularia oryzae (strain 70-15 / ATCC MYA-4617 / FGSC 8958) (Rice blast fungus).